A 1010-amino-acid polypeptide reads, in one-letter code: Retinoblastoma-related protein 1 (1010 aa).

Residues 1–23 are disordered; the sequence is MEGAAPPASSGSEVTGAGSGKVD. The interval 419-619 is domain A; sequence TPVSTAMTTA…EKGSSMYNSL (201 aa). Positions 419 to 861 are pocket; it reads TPVSTAMTTA…NEVFIPTVKP (443 aa). A spacer region spans residues 620-730; the sequence is IVARPTLSAE…PAAGGELCAE (111 aa). A disordered region spans residues 657–679; the sequence is LPPLPFQKQEHSPDKDEVRSPKR. Residues 664-679 show a composition bias toward basic and acidic residues; sequence KQEHSPDKDEVRSPKR. The tract at residues 731-861 is domain B; the sequence is TGIGVFLSKI…NEVFIPTVKP (131 aa). The interval 868-898 is disordered; it reads SGTSPNKKNEEKCAADGPYPESPRLSRFPNL.

The protein belongs to the retinoblastoma protein (RB) family.

It localises to the nucleus. Regulator of biological processes that recruits a histone deacetylase to control gene transcription. May play a role in the entry into mitosis, negatively regulating the cell proliferation. Formation of stable complexes with geminiviridae replication-associated proteins may create a cellular environment which favors viral DNA replication. This chain is Retinoblastoma-related protein 1 (RBR1), found in Oryza sativa subsp. indica (Rice).